The following is a 140-amino-acid chain: Large ribosomal subunit protein uL16 (140 aa).

Belongs to the universal ribosomal protein uL16 family. Part of the 50S ribosomal subunit.

In terms of biological role, binds 23S rRNA and is also seen to make contacts with the A and possibly P site tRNAs. This Cytophaga hutchinsonii (strain ATCC 33406 / DSM 1761 / CIP 103989 / NBRC 15051 / NCIMB 9469 / D465) protein is Large ribosomal subunit protein uL16.